The chain runs to 117 residues: Ribonuclease P protein component (117 aa).

Belongs to the RnpA family. As to quaternary structure, consists of a catalytic RNA component (M1 or rnpB) and a protein subunit.

It catalyses the reaction Endonucleolytic cleavage of RNA, removing 5'-extranucleotides from tRNA precursor.. RNaseP catalyzes the removal of the 5'-leader sequence from pre-tRNA to produce the mature 5'-terminus. It can also cleave other RNA substrates such as 4.5S RNA. The protein component plays an auxiliary but essential role in vivo by binding to the 5'-leader sequence and broadening the substrate specificity of the ribozyme. The sequence is that of Ribonuclease P protein component from Limosilactobacillus reuteri subsp. reuteri (strain JCM 1112) (Lactobacillus reuteri).